A 369-amino-acid polypeptide reads, in one-letter code: 4-hydroxy-3-methylbut-2-en-1-yl diphosphate synthase (flavodoxin) (369 aa).

Positions 270, 273, 305, and 312 each coordinate [4Fe-4S] cluster.

Belongs to the IspG family. [4Fe-4S] cluster is required as a cofactor.

It catalyses the reaction (2E)-4-hydroxy-3-methylbut-2-enyl diphosphate + oxidized [flavodoxin] + H2O + 2 H(+) = 2-C-methyl-D-erythritol 2,4-cyclic diphosphate + reduced [flavodoxin]. The protein operates within isoprenoid biosynthesis; isopentenyl diphosphate biosynthesis via DXP pathway; isopentenyl diphosphate from 1-deoxy-D-xylulose 5-phosphate: step 5/6. Functionally, converts 2C-methyl-D-erythritol 2,4-cyclodiphosphate (ME-2,4cPP) into 1-hydroxy-2-methyl-2-(E)-butenyl 4-diphosphate. In Pseudomonas putida (strain W619), this protein is 4-hydroxy-3-methylbut-2-en-1-yl diphosphate synthase (flavodoxin).